The primary structure comprises 336 residues: Glycerol-3-phosphate dehydrogenase [NAD(P)+] (336 aa).

NADPH-binding residues include S14, W15, R35, R36, and K109. 2 residues coordinate sn-glycerol 3-phosphate: K109 and G139. A143 contacts NADPH. Positions 194, 247, 257, 258, and 259 each coordinate sn-glycerol 3-phosphate. K194 functions as the Proton acceptor in the catalytic mechanism. R258 provides a ligand contact to NADPH. Residue E284 participates in NADPH binding.

It belongs to the NAD-dependent glycerol-3-phosphate dehydrogenase family.

It localises to the cytoplasm. It carries out the reaction sn-glycerol 3-phosphate + NAD(+) = dihydroxyacetone phosphate + NADH + H(+). The catalysed reaction is sn-glycerol 3-phosphate + NADP(+) = dihydroxyacetone phosphate + NADPH + H(+). The protein operates within membrane lipid metabolism; glycerophospholipid metabolism. Its function is as follows. Catalyzes the reduction of the glycolytic intermediate dihydroxyacetone phosphate (DHAP) to sn-glycerol 3-phosphate (G3P), the key precursor for phospholipid synthesis. The sequence is that of Glycerol-3-phosphate dehydrogenase [NAD(P)+] from Streptomyces avermitilis (strain ATCC 31267 / DSM 46492 / JCM 5070 / NBRC 14893 / NCIMB 12804 / NRRL 8165 / MA-4680).